A 104-amino-acid polypeptide reads, in one-letter code: UPF0235 protein RBE_0633 (104 aa).

This sequence belongs to the UPF0235 family.

The sequence is that of UPF0235 protein RBE_0633 from Rickettsia bellii (strain RML369-C).